A 718-amino-acid polypeptide reads, in one-letter code: Cyclomaltodextrin glucanotransferase (718 aa).

The first 34 residues, 1–34, serve as a signal peptide directing secretion; it reads MFQMAKRVLLSTTLTFSLLAGSALPFLPASAIYA. The interval 35 to 172 is A1; it reads DADTAVTNKQ…GIKIIIDFAP (138 aa). 4 residues coordinate Ca(2+): Asp61, Asn63, Asn66, and Asn67. Cys77 and Cys84 are joined by a disulfide. 2 residues coordinate Ca(2+): Gly85 and Asp87. 134 to 135 is a binding site for substrate; sequence YW. Asn173 serves as a coordination point for Ca(2+). Residues 173 to 236 are b; the sequence is NHTSPAMETD…NLYDLADLNH (64 aa). Substrate is bound at residue His174. Ile224 serves as a coordination point for Ca(2+). Substrate is bound at residue 227–230; sequence NLYD. Ca(2+) is bound at residue Asp233. Residues 237–440 are A2; the sequence is NNSTIDTYFK…LRKSNPAIAY (204 aa). Substrate is bound at residue Arg261. The Nucleophile role is filled by Asp263. 266–267 provides a ligand contact to substrate; that stretch reads KH. Ca(2+) is bound at residue His267. Glu291 (proton donor) is an active-site residue. The substrate site is built by His361, Asp405, and Arg409. Residues 441–528 form a c region; sequence GSTQQRWINN…ATAVWQYTAS (88 aa). Residues 529–614 form a d region; the sequence is ETTPTIGHVG…SNAYNDFTIL (86 aa). The IPT/TIG domain maps to 532–612; sequence PTIGHVGPVM…VNSNAYNDFT (81 aa). The CBM20 domain maps to 613 to 718; that stretch reads ILSGDQVSVR…GTATVTINWQ (106 aa). Residues 615–718 are e; sequence SGDQVSVRFV…GTATVTINWQ (104 aa).

The protein belongs to the glycosyl hydrolase 13 family. Monomer. Requires Ca(2+) as cofactor.

It is found in the secreted. It carries out the reaction Cyclizes part of a (1-&gt;4)-alpha-D-glucan chain by formation of a (1-&gt;4)-alpha-D-glucosidic bond.. This chain is Cyclomaltodextrin glucanotransferase (cgtA), found in Bacillus licheniformis.